The primary structure comprises 171 residues: Transcription antitermination protein NusB (171 aa).

This sequence belongs to the NusB family.

In terms of biological role, involved in transcription antitermination. Required for transcription of ribosomal RNA (rRNA) genes. Binds specifically to the boxA antiterminator sequence of the ribosomal RNA (rrn) operons. This is Transcription antitermination protein NusB from Brucella ovis (strain ATCC 25840 / 63/290 / NCTC 10512).